A 581-amino-acid chain; its full sequence is Penicillin-binding protein activator LpoA (581 aa).

The first 26 residues, 1 to 26 (MLSILMQGLRLKKCFLPILVMFFLAG), serve as a signal peptide directing secretion. The N-palmitoyl cysteine moiety is linked to residue cysteine 27. Cysteine 27 carries S-diacylglycerol cysteine lipidation.

This sequence belongs to the LpoA family. As to quaternary structure, interacts with PBP1a.

It is found in the cell outer membrane. Its function is as follows. Regulator of peptidoglycan synthesis that is essential for the function of penicillin-binding protein 1A (PBP1a). This chain is Penicillin-binding protein activator LpoA, found in Histophilus somni (strain 129Pt) (Haemophilus somnus).